A 460-amino-acid chain; its full sequence is Cyclin-T1-2 (460 aa).

Disordered regions lie at residues 1–20 (MDEA…SSVA) and 285–345 (QPIS…QDHS). Over residues 314-324 (SDDHSVHDGSR) the composition is skewed to basic and acidic residues. Residues 332–345 (NSESEAQKNLQDHS) show a composition bias toward polar residues.

It belongs to the cyclin family. Cyclin T subfamily.

The protein is Cyclin-T1-2 (CYCT1-2) of Arabidopsis thaliana (Mouse-ear cress).